Here is a 287-residue protein sequence, read N- to C-terminus: 4,4'-diapophytoene synthase (287 aa).

Residues 18-21, tyrosine 41, and arginine 45 each bind (2E,6E)-farnesyl diphosphate; that span reads HSKS. Residues aspartate 48 and aspartate 52 each coordinate Mg(2+). Glutamine 165 is a binding site for (2E,6E)-farnesyl diphosphate. Asparagine 168 lines the Mg(2+) pocket. (2E,6E)-farnesyl diphosphate is bound at residue arginine 171. Aspartate 172 is a Mg(2+) binding site. A (2E,6E)-farnesyl diphosphate-binding site is contributed by tyrosine 248.

This sequence belongs to the phytoene/squalene synthase family. CrtM subfamily. The cofactor is Mg(2+).

The enzyme catalyses 2 (2E,6E)-farnesyl diphosphate = 15-cis-4,4'-diapophytoene + 2 diphosphate. The protein operates within carotenoid biosynthesis; staphyloxanthin biosynthesis; staphyloxanthin from farnesyl diphosphate: step 1/5. In terms of biological role, involved in the biosynthesis of the yellow-orange carotenoid staphyloxanthin, which plays a role in the virulence via its protective function against oxidative stress. Catalyzes the head-to-head condensation of two molecules of farnesyl diphosphate (FPP) into the colorless C(30) carotenoid 4,4'-diapophytoene (dehydrosqualene). The protein is 4,4'-diapophytoene synthase of Staphylococcus aureus (strain NCTC 8325 / PS 47).